The following is a 347-amino-acid chain: D-fructose 1,6-bisphosphatase class 2/sedoheptulose 1,7-bisphosphatase (347 aa).

Mn(2+) is bound by residues Asp-33, Glu-57, Asp-97, and Glu-100. Substrate-binding positions include 100–102, Tyr-131, 176–178, and 198–200; these read EGT, RDR, and DGD. Position 225 (Glu-225) interacts with Mn(2+).

It belongs to the FBPase class 2 family. In terms of assembly, homotetramer. The cofactor is Mn(2+).

It catalyses the reaction beta-D-fructose 1,6-bisphosphate + H2O = beta-D-fructose 6-phosphate + phosphate. It carries out the reaction D-sedoheptulose 1,7-bisphosphate + H2O = D-sedoheptulose 7-phosphate + phosphate. It functions in the pathway carbohydrate biosynthesis; Calvin cycle. In terms of biological role, catalyzes the hydrolysis of fructose 1,6-bisphosphate (Fru 1,6-P2) and sedoheptulose 1,7-bisphosphate (Sed 1,7-P2) to fructose 6-phosphate and sedoheptulose 7-phosphate, respectively. The chain is D-fructose 1,6-bisphosphatase class 2/sedoheptulose 1,7-bisphosphatase from Thermosynechococcus vestitus (strain NIES-2133 / IAM M-273 / BP-1).